Consider the following 422-residue polypeptide: MALRGCHRLEVIFKRCIASPVLHSQAGNRRSSQLAIKGVDPNSNGNSGQYQQNGEHKEKGWRRLVRFFVPFSLGAAVSAAIIQREDFTPTIAASKMTGRRRDFNFIADVVAGCADSVVYIEIKDTRHFDYFSGQPITASNGSGFIIEQNGLILTNAHVVINKPHTMVQVRLSDGRTFPATIEDVDQTSDLATLRIQVNNLSVMRLGKSSTLRSGEWVVALGSPLALSNTVTAGVISSTQRASQELGLRNRDINYLQTDAAITFGNSGGPLVNLDGEAIGVNSMKVTAGISFAIPIDYVKVFLERAAEKRKKGSAYKTGYPVKRYMGITMLTLTPDILFELKSRSQNMPNNLTHGVLVWKVIVGSPAHSGGLQPGDIVTHINKKEIKNSSDVYDALADNSKTLDIVILRGVKQMHVTITPEDP.

The transit peptide at 1 to 17 directs the protein to the mitochondrion; sequence MALRGCHRLEVIFKRCI. A propeptide spanning residues 18–74 is cleaved from the precursor; sequence ASPVLHSQAGNRRSSQLAIKGVDPNSNGNSGQYQQNGEHKEKGWRRLVRFFVPFSLG. Residues 33–55 form a disordered region; sequence QLAIKGVDPNSNGNSGQYQQNGE. A compositionally biased stretch (low complexity) spans 42–53; the sequence is NSNGNSGQYQQN. The helical transmembrane segment at 64–82 threads the bilayer; the sequence is LVRFFVPFSLGAAVSAAII. 2 consecutive short sequence motifs (IAP-binding) follow at residues 75–78 and 94–97; these read AAVS and SKMT. Residues 139–302 are serine protease; that stretch reads SNGSGFIIEQ…IPIDYVKVFL (164 aa). Residues histidine 157, aspartate 189, and serine 266 each act as charge relay system in the active site. In terms of domain architecture, PDZ spans 325 to 410; that stretch reads MGITMLTLTP…TLDIVILRGV (86 aa).

This sequence belongs to the peptidase S1C family. Interacts with th/DIAP1 (via BIR 2 domain).

It localises to the mitochondrion intermembrane space. The protein localises to the mitochondrion membrane. The catalysed reaction is Cleavage of non-polar aliphatic amino-acids at the P1 position, with a preference for Val, Ile and Met. At the P2 and P3 positions, Arg is selected most strongly with a secondary preference for other hydrophilic residues.. Its function is as follows. Serine protease that shows proteolytic activity against a non-specific substrate beta-casein. Promotes or induces cell death either by direct binding to and inhibition of BIRC proteins (also called inhibitor of apoptosis proteins, IAPs), leading to an increase in caspase activity, or by a BIRC inhibition-independent, caspase-independent and serine protease activity-dependent mechanism. Can antagonize antiapoptotic activity of th/Diap1 by directly inducing the degradation of th/Diap1. This is Serine protease HTRA2, mitochondrial from Drosophila simulans (Fruit fly).